Reading from the N-terminus, the 350-residue chain is Arginine N-succinyltransferase (350 aa).

L125 provides a ligand contact to succinyl-CoA. The active-site Proton donor is H229.

It belongs to the arginine N-succinyltransferase family.

It carries out the reaction succinyl-CoA + L-arginine = N(2)-succinyl-L-arginine + CoA + H(+). The protein operates within amino-acid degradation; L-arginine degradation via AST pathway; L-glutamate and succinate from L-arginine: step 1/5. Its function is as follows. Catalyzes the transfer of succinyl-CoA to arginine to produce N(2)-succinylarginine. This chain is Arginine N-succinyltransferase, found in Yersinia pseudotuberculosis serotype O:3 (strain YPIII).